The following is a 305-amino-acid chain: Ribonuclease H (305 aa).

The enzyme catalyses Endonucleolytic cleavage to 5'-phosphomonoester.. In terms of biological role, plays essential roles in DNA replication by removing the RNA primers from lagging strand fragments. Exhibits 5'to 3' exonuclease activity on either RNA/DNA or DNA/DNA duplexes and endonuclease activity on either flap or fork DNA structures. The polypeptide is Ribonuclease H (rnh) (Enterobacteria phage T4 (Bacteriophage T4)).